Here is a 184-residue protein sequence, read N- to C-terminus: MLTMKDVIREGDPILRNVAEEVSLPASEEDTTTLKEMIEFVINSQDPEMAEKYSLRPGIGLAAPQIGVSKKMIAVHVTDADGTLYSHALFNPKIISHSVERTYLQGGEGCLSVDREVPGYVPRYTRITVKATSINGEEVKLRLKGLPAIVFQHEIDHLNGVMFYDHINKENPFAAPDDSKPLER.

Residues cysteine 110 and histidine 153 each coordinate Fe cation. Glutamate 154 is a catalytic residue. Histidine 157 provides a ligand contact to Fe cation.

Belongs to the polypeptide deformylase family. The cofactor is Fe(2+).

The catalysed reaction is N-terminal N-formyl-L-methionyl-[peptide] + H2O = N-terminal L-methionyl-[peptide] + formate. In terms of biological role, removes the formyl group from the N-terminal Met of newly synthesized proteins. Requires at least a dipeptide for an efficient rate of reaction. N-terminal L-methionine is a prerequisite for activity but the enzyme has broad specificity at other positions. The sequence is that of Peptide deformylase 2 from Bacillus cereus (strain ATCC 14579 / DSM 31 / CCUG 7414 / JCM 2152 / NBRC 15305 / NCIMB 9373 / NCTC 2599 / NRRL B-3711).